The sequence spans 75 residues: Small ribosomal subunit protein bS18 (75 aa).

The protein belongs to the bacterial ribosomal protein bS18 family. As to quaternary structure, part of the 30S ribosomal subunit. Forms a tight heterodimer with protein bS6.

In terms of biological role, binds as a heterodimer with protein bS6 to the central domain of the 16S rRNA, where it helps stabilize the platform of the 30S subunit. The chain is Small ribosomal subunit protein bS18 from Thermotoga sp. (strain RQ2).